The chain runs to 999 residues: Lysosomal alpha-mannosidase (999 aa).

Residues 1–25 (MVGDARPSGVRAGGCRGAVGSRTSS) are disordered. An N-terminal signal peptide occupies residues 1 to 50 (MVGDARPSGVRAGGCRGAVGSRTSSRALRPPLPPLSSLFVLFLAAPCAWA). Zn(2+) is bound by residues His73 and Asp75. An N-linked (GlcNAc...) asparagine glycan is attached at Asn134. Asp197 provides a ligand contact to Zn(2+). Asp197 functions as the Nucleophile in the catalytic mechanism. A disulfide bridge links Cys269 with Cys274. The N-linked (GlcNAc...) asparagine glycan is linked to Asn369. Zn(2+) is bound at residue His448. Cys495 and Cys503 are disulfide-bonded. Asn499 carries N-linked (GlcNAc...) asparagine glycosylation. A propeptide spanning residues 591 to 621 (SRDLVIQNEYLRARFDPNTGLLMELENLEQN) is cleaved from the precursor. Residues Asn634, Asn640, Asn681, Asn755, and Asn919 are each glycosylated (N-linked (GlcNAc...) asparagine).

This sequence belongs to the glycosyl hydrolase 38 family. As to quaternary structure, homodimer. It depends on Zn(2+) as a cofactor. Processed into 5 peptides of 35/38 kDa (A), 11/13 kDa (B) and 22 kDa (C), 38 kDa (D) and 13/15 kDa (E). The A, B and C peptides are disulfide-linked into a 67 kDa complex. In terms of processing, heavily glycosylated. Some sugar chains are of the high-mannose type.

It localises to the lysosome. It catalyses the reaction Hydrolysis of terminal, non-reducing alpha-D-mannose residues in alpha-D-mannosides.. Functionally, necessary for the catabolism of N-linked carbohydrates released during glycoprotein turnover. The chain is Lysosomal alpha-mannosidase (MAN2B1) from Bos taurus (Bovine).